Here is a 563-residue protein sequence, read N- to C-terminus: Glutamate--tRNA ligase (563 aa).

The tract at residues 61–94 is disordered; the sequence is PEEQQKEVESLGGLEQHTKKEEKPKGLPELKNTE. The span at 76–94 shows a compositional bias: basic and acidic residues; that stretch reads QHTKKEEKPKGLPELKNTE. The 'HIGH' region motif lies at 104–114; it reads PNPSGPLHIGH.

This sequence belongs to the class-I aminoacyl-tRNA synthetase family. Glutamate--tRNA ligase type 2 subfamily.

It localises to the cytoplasm. It carries out the reaction tRNA(Glu) + L-glutamate + ATP = L-glutamyl-tRNA(Glu) + AMP + diphosphate. Functionally, catalyzes the attachment of glutamate to tRNA(Glu) in a two-step reaction: glutamate is first activated by ATP to form Glu-AMP and then transferred to the acceptor end of tRNA(Glu). This Methanosphaera stadtmanae (strain ATCC 43021 / DSM 3091 / JCM 11832 / MCB-3) protein is Glutamate--tRNA ligase.